A 194-amino-acid polypeptide reads, in one-letter code: PBAN-type neuropeptides (194 aa).

The first 23 residues, 1-23 (MFNQTQLFVFLAVFTTSSVLGNN), serve as a signal peptide directing secretion. Leucine amide is present on leucine 47. Positions 51-94 (SLRISTEDNRQAFFKLLEAADALKYYYDQLPYEMQADEPETRVT) are excised as a propeptide. Leucine 103, leucine 123, leucine 159, and leucine 169 each carry leucine amide. Positions 172-194 (ELSYDMMPNKIRVVRSTNKTRST) are excised as a propeptide.

It belongs to the pyrokinin family. As to expression, expressed in the subesophageal ganglions. Not found in corpora cardiaca, corpora allata and thoracic ganglia.

The protein resides in the secreted. Functionally, a hormone that controls sex pheromone production in females and pheromone responsiveness in male. Also mediates visceral muscle contractile activity (myotropic activity). This is PBAN-type neuropeptides from Helicoverpa zea (Corn earworm moth).